A 138-amino-acid chain; its full sequence is Basic phospholipase A2 PLA-B' (138 aa).

The first 16 residues, 1-16 (MRTLWITAVLLVGVEG), serve as a signal peptide directing secretion. 7 disulfides stabilise this stretch: Cys-42-Cys-131, Cys-44-Cys-60, Cys-59-Cys-111, Cys-65-Cys-138, Cys-66-Cys-104, Cys-73-Cys-97, and Cys-91-Cys-102. 3 residues coordinate Ca(2+): Tyr-43, Gly-45, and Gly-47. Residue His-63 is part of the active site. Asp-64 lines the Ca(2+) pocket. Asp-105 is a catalytic residue.

Belongs to the phospholipase A2 family. Group II subfamily. D49 sub-subfamily. Ca(2+) is required as a cofactor. Expressed by the venom gland.

It localises to the secreted. It catalyses the reaction a 1,2-diacyl-sn-glycero-3-phosphocholine + H2O = a 1-acyl-sn-glycero-3-phosphocholine + a fatty acid + H(+). In terms of biological role, PLA2 catalyzes the calcium-dependent hydrolysis of the 2-acyl groups in 3-sn-phosphoglycerides. The sequence is that of Basic phospholipase A2 PLA-B' from Protobothrops flavoviridis (Habu).